Reading from the N-terminus, the 257-residue chain is Type III pantothenate kinase (257 aa).

An ATP-binding site is contributed by 6–13 (DVGNTNTV). Residues Tyr-100 and 107 to 110 (GADR) contribute to the substrate site. The active-site Proton acceptor is Asp-109. Asp-129 is a K(+) binding site. ATP is bound at residue Thr-132. Residue Thr-185 participates in substrate binding.

This sequence belongs to the type III pantothenate kinase family. As to quaternary structure, homodimer. It depends on NH4(+) as a cofactor. K(+) serves as cofactor.

The protein localises to the cytoplasm. The catalysed reaction is (R)-pantothenate + ATP = (R)-4'-phosphopantothenate + ADP + H(+). The protein operates within cofactor biosynthesis; coenzyme A biosynthesis; CoA from (R)-pantothenate: step 1/5. Catalyzes the phosphorylation of pantothenate (Pan), the first step in CoA biosynthesis. This chain is Type III pantothenate kinase, found in Desulfatibacillum aliphaticivorans.